Here is a 29-residue protein sequence, read N- to C-terminus: Protein 1.5 (29 aa).

The protein is Protein 1.5 of Escherichia phage T7 (Bacteriophage T7).